Consider the following 615-residue polypeptide: Aspartokinase (615 aa).

Disordered regions lie at residues 84-105 and 127-171; these read ALQP…GTAT and SSVS…SISQ. 2 stretches are compositionally biased toward low complexity: residues 90–102 and 127–164; these read SSSG…SMSG and SSVS…ATPS. The ACT domain maps to 467-537; that stretch reads IHSNRKTLSH…EVTVSKDMAI (71 aa).

The protein belongs to the aspartokinase family.

The enzyme catalyses L-aspartate + ATP = 4-phospho-L-aspartate + ADP. The protein operates within amino-acid biosynthesis; L-methionine biosynthesis via de novo pathway; L-homoserine from L-aspartate: step 1/3. Its pathway is amino-acid biosynthesis; L-threonine biosynthesis; L-threonine from L-aspartate: step 1/5. In terms of biological role, phosphorylates aspartate, the first step in the biosynthesis of amino acids that derive from aspartate (the aspartate family of amino acids), including methioinine and threonine, the latter of which is a precursor to isoleucine. The polypeptide is Aspartokinase (Cryptococcus neoformans var. grubii serotype A (strain H99 / ATCC 208821 / CBS 10515 / FGSC 9487) (Filobasidiella neoformans var. grubii)).